We begin with the raw amino-acid sequence, 387 residues long: Exodeoxyribonuclease 7 large subunit (387 aa).

Belongs to the XseA family. In terms of assembly, heterooligomer composed of large and small subunits.

It is found in the cytoplasm. It catalyses the reaction Exonucleolytic cleavage in either 5'- to 3'- or 3'- to 5'-direction to yield nucleoside 5'-phosphates.. Bidirectionally degrades single-stranded DNA into large acid-insoluble oligonucleotides, which are then degraded further into small acid-soluble oligonucleotides. The polypeptide is Exodeoxyribonuclease 7 large subunit (Synechococcus sp. (strain CC9902)).